Reading from the N-terminus, the 400-residue chain is Phosphoglycerate kinase (400 aa).

Substrate-binding positions include 21–23 (DFN), R37, 60–63 (HLGR), R121, and R154. ATP is bound by residues K204, E326, and 355 to 358 (GGDS).

The protein belongs to the phosphoglycerate kinase family. As to quaternary structure, monomer.

It localises to the cytoplasm. It carries out the reaction (2R)-3-phosphoglycerate + ATP = (2R)-3-phospho-glyceroyl phosphate + ADP. Its pathway is carbohydrate degradation; glycolysis; pyruvate from D-glyceraldehyde 3-phosphate: step 2/5. The protein is Phosphoglycerate kinase of Chloroflexus aggregans (strain MD-66 / DSM 9485).